A 412-amino-acid polypeptide reads, in one-letter code: CCA-adding enzyme (412 aa).

ATP-binding residues include serine 41 and lysine 44. Residues serine 41 and lysine 44 each coordinate CTP. Mg(2+) is bound by residues aspartate 53, aspartate 55, and aspartate 106. ATP contacts are provided by histidine 129, lysine 149, and tyrosine 158. CTP is bound by residues histidine 129, lysine 149, and tyrosine 158.

It belongs to the tRNA nucleotidyltransferase/poly(A) polymerase family. Archaeal CCA-adding enzyme subfamily. As to quaternary structure, homodimer. The cofactor is Mg(2+).

The enzyme catalyses a tRNA precursor + 2 CTP + ATP = a tRNA with a 3' CCA end + 3 diphosphate. It carries out the reaction a tRNA with a 3' CCA end + 2 CTP + ATP = a tRNA with a 3' CCACCA end + 3 diphosphate. Functionally, catalyzes the addition and repair of the essential 3'-terminal CCA sequence in tRNAs without using a nucleic acid template. Adds these three nucleotides in the order of C, C, and A to the tRNA nucleotide-73, using CTP and ATP as substrates and producing inorganic pyrophosphate. tRNA 3'-terminal CCA addition is required both for tRNA processing and repair. Also involved in tRNA surveillance by mediating tandem CCA addition to generate a CCACCA at the 3' terminus of unstable tRNAs. While stable tRNAs receive only 3'-terminal CCA, unstable tRNAs are marked with CCACCA and rapidly degraded. In Saccharolobus islandicus (strain M.16.27) (Sulfolobus islandicus), this protein is CCA-adding enzyme.